Consider the following 191-residue polypeptide: Protein phosphatase inhibitor 2 (191 aa).

Positions 20 to 31 are enriched in basic and acidic residues; it reads ESNKPVRQKITE. Disordered stretches follow at residues 20–52 and 67–191; these read ESNK…RGRA and RNVL…PELI. Phosphoserine is present on residues Ser45 and Ser47. The span at 93–109 shows a compositional bias: acidic residues; the sequence is SDEEEEEADPMDQDEEG. Residues 114–136 show a composition bias toward basic and acidic residues; the sequence is KNERFNAHRKAHYDEFRKVKELR.

As to quaternary structure, interacts with protein phosphatase 1. Interacts with TOPP1, SRK2D/SNRK2.2, SRK2I/SNRK2.3, SRK2E/SNRK2.6, SRK2C/SNRK2.8 and PYL11. Post-translationally, phosphorylated in vivo. In terms of tissue distribution, expressed in roots, cotyledons, leaves, flowers and siliques.

Its subcellular location is the nucleus. The protein resides in the cytoplasm. In terms of biological role, inhibitor of protein-phosphatase 1 (PP1). Binds to and inhibits PP1 activity. Acts as negative regulator of abscisic acid (ABA) signaling. Enhances the inhibition of SRK2E/SNRK2.6 by TOPP1. May promote the interaction between TOPP1 and the ABA receptor PYL11. This is Protein phosphatase inhibitor 2 from Arabidopsis thaliana (Mouse-ear cress).